The primary structure comprises 90 residues: uncharacterized protein (90 aa).

This is an uncharacterized protein from Treponema pallidum (strain Nichols).